A 131-amino-acid chain; its full sequence is Large ribosomal subunit protein eL32 (131 aa).

Belongs to the eukaryotic ribosomal protein eL32 family.

The sequence is that of Large ribosomal subunit protein eL32 (RPL32) from Candida glabrata (strain ATCC 2001 / BCRC 20586 / JCM 3761 / NBRC 0622 / NRRL Y-65 / CBS 138) (Yeast).